Consider the following 442-residue polypeptide: Chromosomal replication initiator protein DnaA (442 aa).

The segment at 1-75 (MDAWPRCLER…GNGEVALAVG (75 aa)) is domain I, interacts with DnaA modulators. The segment at 75–104 (GSRPRAPEPAPAAAAVPSAPQAAPMVPFAG) is domain II. Residues 105 to 322 (NLDSHYTFAN…GALNTLVARA (218 aa)) are domain III, AAA+ region. ATP contacts are provided by Gly150, Gly152, Lys153, and Thr154. Positions 323–442 (NFTGRSITVE…WEKLIRKLSE (120 aa)) are domain IV, binds dsDNA.

It belongs to the DnaA family. Oligomerizes as a right-handed, spiral filament on DNA at oriC.

The protein localises to the cytoplasm. Its function is as follows. Plays an essential role in the initiation and regulation of chromosomal replication. ATP-DnaA binds to the origin of replication (oriC) to initiate formation of the DNA replication initiation complex once per cell cycle. Binds the DnaA box (a 9 base pair repeat at the origin) and separates the double-stranded (ds)DNA. Forms a right-handed helical filament on oriC DNA; dsDNA binds to the exterior of the filament while single-stranded (ss)DNA is stabiized in the filament's interior. The ATP-DnaA-oriC complex binds and stabilizes one strand of the AT-rich DNA unwinding element (DUE), permitting loading of DNA polymerase. After initiation quickly degrades to an ADP-DnaA complex that is not apt for DNA replication. Binds acidic phospholipids. The sequence is that of Chromosomal replication initiator protein DnaA from Xanthomonas euvesicatoria pv. vesicatoria (strain 85-10) (Xanthomonas campestris pv. vesicatoria).